Consider the following 182-residue polypeptide: Capsid protein (182 aa).

The disordered stretch occupies residues 136–182 (NAPILSTLPETTVVRRRRPSGRRTPSPRRRRSQSPRRRRSQSPASSC). The segment covering 149 to 175 (VRRRRPSGRRTPSPRRRRSQSPRRRRS) has biased composition (basic residues). Positions 157-174 (RRTPSPRRRRSQSPRRRR) match the Bipartite nuclear localization signal motif. Residues Ser-161 and Ser-169 each carry the phosphoserine; by host modification. 2 consecutive repeat copies span residues 161–168 (SPRRRRSQ) and 169–176 (SPRRRRSQ). Positions 161-176 (SPRRRRSQSPRRRRSQ) are 2 X 8 AA repeats of S-P-R-R-R-[PR]-S-Q. Positions 176-182 (QSPASSC) are RNA binding.

It belongs to the orthohepadnavirus core antigen family. As to quaternary structure, homodimerizes, then multimerizes. Interacts with cytosol exposed regions of viral L glycoprotein present in the reticulum-to-Golgi compartment. Interacts with human FLNB. Phosphorylated form interacts with host importin alpha; this interaction depends on the exposure of the NLS, which itself depends upon genome maturation and/or phosphorylation of the capsid protein. Interacts with host NUP153. Phosphorylated by host SRPK1, SRPK2, and maybe protein kinase C or GAPDH. Phosphorylation is critical for pregenomic RNA packaging. Protein kinase C phosphorylation is stimulated by HBx protein and may play a role in transport of the viral genome to the nucleus at the late step during the viral replication cycle.

It localises to the virion. The protein localises to the host cytoplasm. Its function is as follows. Self assembles to form an icosahedral capsid. Most capsids appear to be large particles with an icosahedral symmetry of T=4 and consist of 240 copies of capsid protein, though a fraction forms smaller T=3 particles consisting of 180 capsid proteins. Entering capsids are transported along microtubules to the nucleus. Phosphorylation of the capsid is thought to induce exposure of nuclear localization signal in the C-terminal portion of the capsid protein that allows binding to the nuclear pore complex via the importin (karyopherin-) alpha and beta. Capsids are imported in intact form through the nuclear pore into the nuclear basket, where it probably binds NUP153. Only capsids that contain the mature viral genome can release the viral DNA and capsid protein into the nucleoplasm. Immature capsids get stuck in the basket. Capsids encapsulate the pre-genomic RNA and the P protein. Pre-genomic RNA is reverse-transcribed into DNA while the capsid is still in the cytoplasm. The capsid can then either be directed to the nucleus, providing more genomes for transcription, or bud through the endoplasmic reticulum to provide new virions. The protein is Capsid protein of Woolly monkey hepatitis B virus (isolate Louisville) (WMHBV).